The chain runs to 427 residues: Serine--tRNA ligase (427 aa).

231–233 (TAE) contributes to the L-serine binding site. 262 to 264 (RSE) serves as a coordination point for ATP. Glu285 provides a ligand contact to L-serine. 349–352 (EISS) is an ATP binding site. L-serine is bound at residue Ser385.

Belongs to the class-II aminoacyl-tRNA synthetase family. Type-1 seryl-tRNA synthetase subfamily. Homodimer. The tRNA molecule binds across the dimer.

The protein localises to the cytoplasm. The enzyme catalyses tRNA(Ser) + L-serine + ATP = L-seryl-tRNA(Ser) + AMP + diphosphate + H(+). It carries out the reaction tRNA(Sec) + L-serine + ATP = L-seryl-tRNA(Sec) + AMP + diphosphate + H(+). The protein operates within aminoacyl-tRNA biosynthesis; selenocysteinyl-tRNA(Sec) biosynthesis; L-seryl-tRNA(Sec) from L-serine and tRNA(Sec): step 1/1. Functionally, catalyzes the attachment of serine to tRNA(Ser). Is also able to aminoacylate tRNA(Sec) with serine, to form the misacylated tRNA L-seryl-tRNA(Sec), which will be further converted into selenocysteinyl-tRNA(Sec). This chain is Serine--tRNA ligase, found in Brucella abortus (strain S19).